The sequence spans 135 residues: Large ribosomal subunit protein uL16c (135 aa).

The protein belongs to the universal ribosomal protein uL16 family. In terms of assembly, part of the 50S ribosomal subunit.

Its subcellular location is the plastid. The protein resides in the chloroplast. The protein is Large ribosomal subunit protein uL16c of Lotus japonicus (Lotus corniculatus var. japonicus).